Reading from the N-terminus, the 197-residue chain is Shikimate kinase (197 aa).

15 to 20 (GSGKSS) provides a ligand contact to ATP. Position 19 (S19) interacts with Mg(2+). 3 residues coordinate substrate: D37, R61, and G83. R121 provides a ligand contact to ATP. R148 provides a ligand contact to substrate.

Belongs to the shikimate kinase family. In terms of assembly, monomer. The cofactor is Mg(2+).

The protein localises to the cytoplasm. It catalyses the reaction shikimate + ATP = 3-phosphoshikimate + ADP + H(+). It participates in metabolic intermediate biosynthesis; chorismate biosynthesis; chorismate from D-erythrose 4-phosphate and phosphoenolpyruvate: step 5/7. Functionally, catalyzes the specific phosphorylation of the 3-hydroxyl group of shikimic acid using ATP as a cosubstrate. This chain is Shikimate kinase, found in Chlorobium phaeovibrioides (strain DSM 265 / 1930) (Prosthecochloris vibrioformis (strain DSM 265)).